The chain runs to 447 residues: Tubulin beta chain (447 aa).

Positions 11, 69, 138, 142, 143, 144, 204, and 226 each coordinate GTP. Glutamate 69 serves as a coordination point for Mg(2+). The interval 424 to 447 (QYQEASVSEGEEEYDEEAPLEGEE) is disordered. Residues 432 to 447 (EGEEEYDEEAPLEGEE) show a composition bias toward acidic residues.

Belongs to the tubulin family. In terms of assembly, dimer of alpha and beta chains. A typical microtubule is a hollow water-filled tube with an outer diameter of 25 nm and an inner diameter of 15 nM. Alpha-beta heterodimers associate head-to-tail to form protofilaments running lengthwise along the microtubule wall with the beta-tubulin subunit facing the microtubule plus end conferring a structural polarity. Microtubules usually have 13 protofilaments but different protofilament numbers can be found in some organisms and specialized cells. Mg(2+) serves as cofactor.

Its subcellular location is the cytoplasm. The protein resides in the cytoskeleton. In terms of biological role, tubulin is the major constituent of microtubules, a cylinder consisting of laterally associated linear protofilaments composed of alpha- and beta-tubulin heterodimers. Microtubules grow by the addition of GTP-tubulin dimers to the microtubule end, where a stabilizing cap forms. Below the cap, tubulin dimers are in GDP-bound state, owing to GTPase activity of alpha-tubulin. This is Tubulin beta chain from Venturia inaequalis (Apple scab fungus).